A 239-amino-acid polypeptide reads, in one-letter code: Gamma-lactamase MBL2 (239 aa).

Histidine 56, histidine 58, aspartate 60, histidine 61, histidine 141, and aspartate 165 together coordinate Zn(2+).

Belongs to the metallo-beta-lactamase superfamily.

Gamma-lactamase; part of the Fusarium detoxification of benzoxazolinone cluster 2 (FDB2) involved in the degradation of benzoxazolinones produced by the host plant. Maize, wheat, and rye produce the 2 benzoxazinone phytoanticipins 2,4-dihy-droxy-7-methoxy-1,4-benzoxazin-3-one (DIMBOA) and 2,4-dihydroxy-1,4-benzoxazin-3-one (DIBOA) that, due to their inherent instability once released, spontaneously degrade to the more stable corresponding benzoxazolinones, 6-methoxy-2-benzoxazolinone (MBOA) and 2-benzoxazolinone (BOA), respectively. The first step in the detoxification of benzoxazolinones involves the hydrolysis of the cyclic ester bond of benzoxazolinones by the FDB1 cluster gamma-lactamase MBL1 to aminophenols. MBL1 is able to convert BOA into 2-aminophenol (2-AP), as well as MBOA into 5-methoxy-2-aminophenol (2-AMP). The FDB2 cluster N-malonyltransferase FDB2/NAT1 then metabolizes aminophenols via N-malonylation to non-toxic malonamic acids. FDB2/NAT1 converts 2-AP into N-(2-hydroxyphenyl) malonamic acid (HPMA) and 2-AMP into N-(2-hydroxy-4-methoxyphenyl) malonamic acid (HMPMA). The duplicated dienlactone hydrolases DLH1 and DLH2 may provide redundant function for hydrolyzing the lactone moiety in the BOA molecule. The roles of the amidases and other enzymes encoded by the 2 FDB clusters have not been identified so far. This chain is Gamma-lactamase MBL2, found in Gibberella moniliformis (strain M3125 / FGSC 7600) (Maize ear and stalk rot fungus).